Consider the following 540-residue polypeptide: MAKIIAFDEEARRGLERGMNQLADAVKVTLGPKGRNVVLEKKWGAPTITNDGVSIAKEIELEDPYEKIGAELVKEVAKKTDDVAGDGTTTATVLAQALVREGLRNVAAGANPMALKRGIEKAVEAVSSALLEQAKDVETKEQIASTASISAADTQIGELIAEAMDKVGKEGVITVEESQTFGLELELTEGMRFDKGYISAYFATDMERMEASLDDPYILIVNSKIGNVKDLLPLLEKVMQSGKPLLIIAEDVEGEALSTLVVNKIRGTFKSVAVKAPGFGDRRKAMLGDIAILTGGTVISEEVGLKLENAGLDLLGRARKVVITKDETTIVDGAGDTDQVNGRVAQIRAEIENSDSDYDREKLQERLANVAGGVAVIKAGAATEVELKERKHRIEDAVRNAKAAVEEGIVAGGGVALLQASSVFEKLELEGDEATGAAAVKLALEAPLKQIAVNGGLEGGVVVEKVRNLSVGHGLNAATGQYVDMIAEGILDPAKVTRSALQNAASIAALFLTTEAVIADKPEKAAAAAPGGMPGGDMDF.

ATP is bound by residues 29-32 (TLGP), 86-90 (DGTTT), Gly-413, 476-478 (NAA), and Asp-492.

This sequence belongs to the chaperonin (HSP60) family. Forms a cylinder of 14 subunits composed of two heptameric rings stacked back-to-back. Interacts with the co-chaperonin GroES.

The protein resides in the cytoplasm. It carries out the reaction ATP + H2O + a folded polypeptide = ADP + phosphate + an unfolded polypeptide.. Functionally, together with its co-chaperonin GroES, plays an essential role in assisting protein folding. The GroEL-GroES system forms a nano-cage that allows encapsulation of the non-native substrate proteins and provides a physical environment optimized to promote and accelerate protein folding. The chain is Chaperonin GroEL 2 from Streptomyces albus G.